A 319-amino-acid polypeptide reads, in one-letter code: Acetyl-coenzyme A carboxylase carboxyl transferase subunit alpha (319 aa).

Residues 35–296 (NLDEEVQRLR…KAQLLADLLD (262 aa)) enclose the CoA carboxyltransferase C-terminal domain.

Belongs to the AccA family. As to quaternary structure, acetyl-CoA carboxylase is a heterohexamer composed of biotin carboxyl carrier protein (AccB), biotin carboxylase (AccC) and two subunits each of ACCase subunit alpha (AccA) and ACCase subunit beta (AccD).

It localises to the cytoplasm. The catalysed reaction is N(6)-carboxybiotinyl-L-lysyl-[protein] + acetyl-CoA = N(6)-biotinyl-L-lysyl-[protein] + malonyl-CoA. It participates in lipid metabolism; malonyl-CoA biosynthesis; malonyl-CoA from acetyl-CoA: step 1/1. In terms of biological role, component of the acetyl coenzyme A carboxylase (ACC) complex. First, biotin carboxylase catalyzes the carboxylation of biotin on its carrier protein (BCCP) and then the CO(2) group is transferred by the carboxyltransferase to acetyl-CoA to form malonyl-CoA. The sequence is that of Acetyl-coenzyme A carboxylase carboxyl transferase subunit alpha from Pectobacterium atrosepticum (strain SCRI 1043 / ATCC BAA-672) (Erwinia carotovora subsp. atroseptica).